The sequence spans 291 residues: MEKPAASTEPQGSRPALGRESVQVPDDQDFRSFRSECEAEVGWNLTYSKAGVSVWVQAVEMDRTLHKIKCRMECCDVPAETLYDVLHDIEYRKKWDSNVIETFDIARLTVNADVGYYSWRCPKPLKNRDVITLRSWLPMGADYIIMNYSVKHPKYPPRKDLVRAVSIQTGYLIQSTGPKSCVITYLAQVDPKGSLPKWVVNKSSQFLAPKAMKKMYKACIKYPEWKQKHQPHFKPWLHPEQSPLPSLALSELSVQHADSLENIDESAVTESREERAGGAGGEGSDDDTSLT.

Residue Met1 is modified to N-acetylmethionine. The segment at 1–23 is disordered; the sequence is MEKPAASTEPQGSRPALGRESVQ. The START domain occupies 14 to 224; that stretch reads RPALGRESVQ…MYKACIKYPE (211 aa). Lys94, Lys197, and Lys202 each carry N6-succinyllysine. Residues Ser253, Ser259, Ser284, and Ser289 each carry the phosphoserine modification. The segment at 260-291 is disordered; it reads LENIDESAVTESREERAGGAGGEGSDDDTSLT.

In terms of processing, phosphorylation at Ser-284 by CK2 negatively regulates lipid transfer activity, possibly by decreasing membrane association. As to expression, testis, kidney, liver, and intestine with the highest level in the testis.

The protein resides in the cell projection. It localises to the cilium. The protein localises to the flagellum. Its subcellular location is the cytoplasm. It is found in the membrane. In terms of biological role, phospholipid transfer protein that preferentially selects lipid species containing a palmitoyl or stearoyl chain on the sn-1 and an unsaturated fatty acyl chain (18:1 or 18:2) on the sn-2 position. Able to transfer phosphatidylcholine (PC) and phosphatidyetanolamline (PE) between membranes. May play metabolic roles in sperm maturation or fertilization. In Mus musculus (Mouse), this protein is START domain-containing protein 10 (Stard10).